We begin with the raw amino-acid sequence, 164 residues long: Crossover junction endodeoxyribonuclease RuvC (164 aa).

Active-site residues include aspartate 7, glutamate 67, and aspartate 139. Residues aspartate 7, glutamate 67, and aspartate 139 each contribute to the Mg(2+) site.

Belongs to the RuvC family. Homodimer which binds Holliday junction (HJ) DNA. The HJ becomes 2-fold symmetrical on binding to RuvC with unstacked arms; it has a different conformation from HJ DNA in complex with RuvA. In the full resolvosome a probable DNA-RuvA(4)-RuvB(12)-RuvC(2) complex forms which resolves the HJ. The cofactor is Mg(2+).

It is found in the cytoplasm. The enzyme catalyses Endonucleolytic cleavage at a junction such as a reciprocal single-stranded crossover between two homologous DNA duplexes (Holliday junction).. Functionally, the RuvA-RuvB-RuvC complex processes Holliday junction (HJ) DNA during genetic recombination and DNA repair. Endonuclease that resolves HJ intermediates. Cleaves cruciform DNA by making single-stranded nicks across the HJ at symmetrical positions within the homologous arms, yielding a 5'-phosphate and a 3'-hydroxyl group; requires a central core of homology in the junction. The consensus cleavage sequence is 5'-(A/T)TT(C/G)-3'. Cleavage occurs on the 3'-side of the TT dinucleotide at the point of strand exchange. HJ branch migration catalyzed by RuvA-RuvB allows RuvC to scan DNA until it finds its consensus sequence, where it cleaves and resolves the cruciform DNA. The protein is Crossover junction endodeoxyribonuclease RuvC of Geobacter metallireducens (strain ATCC 53774 / DSM 7210 / GS-15).